The following is a 78-amino-acid chain: Magnetosome protein MamL (78 aa).

Residues 1-22 (MVRVIGSLVFGGLILLLASSNA) form the signal peptide. At 23 to 38 (HMVETRFGPLIMLAPH) the chain is on the lumenal side. The helical transmembrane segment at 39–59 (FVVLGITFFLGFAIGIVLVFA) threads the bilayer. Residues 60–78 (NVMKRRKHKLPGKNIVIKR) are Cytoplasmic-facing.

It belongs to the magnetosome MamL family.

It is found in the magnetosome membrane. Involved in magnetite crystal maturation, but not in magnetosome vesicle tubulation or formation. One of 7 genes (mamLQBIEMO) able to induce magnetosome membrane biogenesis; coexpression of mamLQRBIEMO in a deletion of the 17 gene mamAB operon restores magnetosome vesicle formation but not magnetite biosynthesis. The sequence is that of Magnetosome protein MamL from Magnetospirillum gryphiswaldense (strain DSM 6361 / JCM 21280 / NBRC 15271 / MSR-1).